A 417-amino-acid chain; its full sequence is Sterile alpha motif domain-containing protein 14 (417 aa).

2 disordered regions span residues 37–299 (LLAK…WQEA) and 388–417 (AAAE…AKKS). The span at 40-49 (KGRRHRPSRS) shows a compositional bias: basic residues. Residues serine 84 and serine 108 each carry the phosphoserine modification. Residues 135–153 (AAASCSPPRSAPSSDSSPS) show a composition bias toward low complexity. Positions 160–173 (RAEPHSEDDSRDAS) are enriched in basic and acidic residues. 2 positions are modified to phosphoserine: serine 173 and serine 179. 2 stretches are compositionally biased toward low complexity: residues 244–260 (SGKG…PTCS) and 276–295 (STLS…PSGP). Serine 279 carries the post-translational modification Phosphoserine. Threonine 283 is modified (phosphothreonine). Residues 326–389 (WTSQQVGQWL…KRKLKEMAAA (64 aa)) form the SAM domain. Residues 377-417 (ALVKRKLKEMAAAAEKERKAQEKAARQREKLRRREQEAKKS) adopt a coiled-coil conformation. Positions 390 to 417 (AEKERKAQEKAARQREKLRRREQEAKKS) are enriched in basic and acidic residues.

This Homo sapiens (Human) protein is Sterile alpha motif domain-containing protein 14 (SAMD14).